The chain runs to 422 residues: 26S proteasome non-ATPase regulatory subunit 11 (422 aa).

Alanine 2 is subject to N-acetylalanine. Phosphoserine occurs at positions 14 and 23. The region spanning 224–392 is the PCI domain; the sequence is DWKTAYSYFY…GVLIIFDEPP (169 aa). Lysine 274 participates in a covalent cross-link: Glycyl lysine isopeptide (Lys-Gly) (interchain with G-Cter in SUMO2).

It belongs to the proteasome subunit S9 family. Component of the 19S proteasome regulatory particle complex. The 26S proteasome consists of a 20S core particle (CP) and two 19S regulatory subunits (RP). The regulatory particle is made of a lid composed of 9 subunits including PSMD11, a base containing 6 ATPases and few additional components.

In terms of biological role, component of the 26S proteasome, a multiprotein complex involved in the ATP-dependent degradation of ubiquitinated proteins. This complex plays a key role in the maintenance of protein homeostasis by removing misfolded or damaged proteins, which could impair cellular functions, and by removing proteins whose functions are no longer required. Therefore, the proteasome participates in numerous cellular processes, including cell cycle progression, apoptosis, or DNA damage repair. In the complex, PSMD11 is required for proteasome assembly. Plays a key role in increased proteasome activity in embryonic stem cells (ESCs): its high expression in ESCs promotes enhanced assembly of the 26S proteasome, followed by higher proteasome activity. The chain is 26S proteasome non-ATPase regulatory subunit 11 (Psmd11) from Mus musculus (Mouse).